The following is a 305-amino-acid chain: PI protein (305 aa).

This sequence belongs to the initiator RepB protein family. As to quaternary structure, homodimer.

Its function is as follows. Initiation for plasmid R6K DNA replication. This is PI protein (pir) from Escherichia coli.